The following is a 217-amino-acid chain: Probable GTP-binding protein EngB (217 aa).

Residues glycine 29–isoleucine 213 enclose the EngB-type G domain. GTP is bound by residues glycine 37 to serine 44, glycine 64 to glutamate 68, aspartate 91 to glycine 94, threonine 158 to aspartate 161, and threonine 192 to serine 194. Positions 44 and 66 each coordinate Mg(2+).

This sequence belongs to the TRAFAC class TrmE-Era-EngA-EngB-Septin-like GTPase superfamily. EngB GTPase family. The cofactor is Mg(2+).

In terms of biological role, necessary for normal cell division and for the maintenance of normal septation. The chain is Probable GTP-binding protein EngB from Rhizobium etli (strain ATCC 51251 / DSM 11541 / JCM 21823 / NBRC 15573 / CFN 42).